The following is a 446-amino-acid chain: Na(+)-translocating NADH-quinone reductase subunit A (446 aa).

This sequence belongs to the NqrA family. Composed of six subunits; NqrA, NqrB, NqrC, NqrD, NqrE and NqrF.

It carries out the reaction a ubiquinone + n Na(+)(in) + NADH + H(+) = a ubiquinol + n Na(+)(out) + NAD(+). In terms of biological role, NQR complex catalyzes the reduction of ubiquinone-1 to ubiquinol by two successive reactions, coupled with the transport of Na(+) ions from the cytoplasm to the periplasm. NqrA to NqrE are probably involved in the second step, the conversion of ubisemiquinone to ubiquinol. The protein is Na(+)-translocating NADH-quinone reductase subunit A of Vibrio vulnificus (strain CMCP6).